A 250-amino-acid chain; its full sequence is Hydroxyacylglutathione hydrolase (250 aa).

Positions 53, 55, 57, 58, 111, 128, and 166 each coordinate Zn(2+).

This sequence belongs to the metallo-beta-lactamase superfamily. Glyoxalase II family. Monomer. The cofactor is Zn(2+).

The enzyme catalyses an S-(2-hydroxyacyl)glutathione + H2O = a 2-hydroxy carboxylate + glutathione + H(+). The protein operates within secondary metabolite metabolism; methylglyoxal degradation; (R)-lactate from methylglyoxal: step 2/2. In terms of biological role, thiolesterase that catalyzes the hydrolysis of S-D-lactoyl-glutathione to form glutathione and D-lactic acid. This Methylobacillus flagellatus (strain ATCC 51484 / DSM 6875 / VKM B-1610 / KT) protein is Hydroxyacylglutathione hydrolase.